A 140-amino-acid polypeptide reads, in one-letter code: Holo-[acyl-carrier-protein] synthase (140 aa).

2 residues coordinate Mg(2+): D8 and E62.

Belongs to the P-Pant transferase superfamily. AcpS family. Requires Mg(2+) as cofactor.

The protein resides in the cytoplasm. The catalysed reaction is apo-[ACP] + CoA = holo-[ACP] + adenosine 3',5'-bisphosphate + H(+). Transfers the 4'-phosphopantetheine moiety from coenzyme A to a Ser of acyl-carrier-protein. This chain is Holo-[acyl-carrier-protein] synthase, found in Cupriavidus necator (strain ATCC 17699 / DSM 428 / KCTC 22496 / NCIMB 10442 / H16 / Stanier 337) (Ralstonia eutropha).